We begin with the raw amino-acid sequence, 643 residues long: MGRNWFQVTAMAVVPVVGIMAAVNPTILSSAASSLPSLGAMFTSDDFASQMDGRIQAQGLLSSHFGMYGWPGQSFDYVIVGGGTAGLAMARRLSQDGTASVAVIEAGGFYETDAGNATEVPMYLFNYFFDNGKVKNPLFDWYQYTTPQPGLAQREMFYMQGKTLGGSTARGAMLYHRGSKGAYDMWADHVGDDSYRWDKWLPYFQKSVHFSGPETNPRPANATALNDNTAFTASGGPVHVGYPFQVNAISSWVDRALAKMGFPEAQGFSNGNLLGRSYITHTINPYTRRRETASSSYLREALMESNNLNIFTRTLVKRVLFDDQNRATGVTVNTDGFEWQIGARKEVILSAGVMRSPQLLMVSGIGPKDHLEQLGIPVRSDLSGVGQNMQDTIILGPTVPVKVESHSQLMGNKETLPRAIREYNEQRKGLLTNPGQDYFAFEKHQPGMLKESTAADIDAAFPDDWPTFSYIALDDTFVPQYDGKNYFSMSAALMTPFSRGTVTINSNDTANPPIVDPQWLADPRDQEMAVAAFRRCREIVASDVMREVVAGPEILPGPQYQTDEEILNYIAETSDAYYAGVGTCAMGKADDPKAVVDSKARVLGVKGLRIVDASIFPFAIDGQPMGTVYALAEKIAAEMMAGQ.

Residues 1-41 constitute a propeptide that is removed on maturation; that stretch reads MGRNWFQVTAMAVVPVVGIMAAVNPTILSSAASSLPSLGAM. Residues 84 to 85 and 105 to 106 each bind FAD; these read TA and EA. N116 is a glycosylation site (N-linked (GlcNAc...) asparagine). FAD is bound at residue 171–174; the sequence is GAML. 2 N-linked (GlcNAc...) asparagine glycosylation sites follow: N221 and N507. FAD is bound by residues A613 and 624–625; that span reads PM.

The protein belongs to the GMC oxidoreductase family. In terms of assembly, homodimer. Requires FAD as cofactor. N-glycosylated.

The protein localises to the cytoplasm. The protein resides in the cytosol. It carries out the reaction (2S-3S)-versiconal hemiacetal = versicolorin B + H2O. It catalyses the reaction (S)-5'-oxoaverantin + H(+) = (1'S,5'S)-averufin + H2O. Its pathway is mycotoxin biosynthesis; aflatoxin biosynthesis. In terms of biological role, dual cyclase; part of the gene cluster that mediates the biosynthesis of aflatoxins, a group of polyketide-derived furanocoumarins, and part of the most toxic and carcinogenic compounds among the known mycotoxins. The four major aflatoxins produced by A.parasiticus are aflatoxin B1 (AFB1), aflatoxin B2 (AFB2), aflatoxin G1 (AFG1) and aflatoxin G2 (AFG2). Aflk plays a dual role within the aflatoxin pathway, as a 5'-oxoaverantin cyclase that mediates conversion of 5'-oxoaverantin (OAVN) to averufin (AVF), as well as a versicolorin B synthase that converts versiconal (VAL) to versicolorin B (VERB) by closing the bisfuran ring of aflatoxin which is required for DNA-binding, thus giving to aflatoxin its activity as a mutagen. The biosynthesis of aflatoxins begins with the norsolorinic acid synthase aflC that combines a hexanoyl starter unit produced by the fatty acid synthase aflA/aflB and 7 malonyl-CoA extender units to synthesize the precursor NOR. The second step is the conversion of NOR to averantin and requires the norsolorinic acid ketoreductase aflD, which catalyzes the dehydration of norsolorinic acid to form (1'S)-averantin. The norsolorinic acid reductases aflE and aflF may also play a role in the conversion of NOR to AVN. The cytochrome P450 monooxygenase aflG then catalyzes the hydroxylation of AVN to 5'hydroxyaverantin (HAVN). The next step is performed by the 5'-hydroxyaverantin dehydrogenase aflH that transforms HAVN to 5'-oxoaverantin (OAVN) which is further converted to averufin (AVF) by aflK that plays a dual role in the pathway, as a 5'-oxoaverantin cyclase that mediates conversion of 5'-oxoaverantin, as well as a versicolorin B synthase in a later step in the pathway. The averufin oxidase aflI catalyzes the conversion of AVF to versiconal hemiacetal acetate (VHA). VHA is then the substrate for the versiconal hemiacetal acetate esterase aflJ to yield versiconal (VAL). Versicolorin B synthase aflK then converts VAL to versicolorin B (VERB) by closing the bisfuran ring of aflatoxin which is required for DNA-binding, thus giving to aflatoxin its activity as a mutagen. Then, the activity of the versicolorin B desaturase aflL leads to versicolorin A (VERA). A branch point starts from VERB since it can also be converted to dihydrodemethylsterigmatocystin (DMDHST), probably also by aflL, VERA being a precursor for aflatoxins B1 and G1, and DMDHST for aflatoxins B2 and G2. Next, the versicolorin reductase aflM and the cytochrome P450 monooxygenase aflN are involved in conversion of VERA to demethylsterigmatocystin (DMST). AflX and aflY seem also involved in this step, through probable aflX-mediated epoxide ring-opening step following versicolorin A oxidation and aflY-mediated Baeyer-Villiger oxidation required for the formation of the xanthone ring. The methyltransferase aflO then leads to the modification of DMST to sterigmatocystin (ST), and of DMDHST to dihydrosterigmatocystin (DHST). Both ST and DHST are then substrates of the O-methyltransferase aflP to yield O-methylsterigmatocystin (OMST) and dihydro-O-methylsterigmatocystin (DHOMST), respectively. Finally OMST is converted to aflatoxins B1 and G1, and DHOMST to aflatoxins B2 and G2, via the action of several enzymes including O-methylsterigmatocystin oxidoreductase aflQ, the cytochrome P450 monooxygenase aflU, but also the NADH-dependent flavin oxidoreductase nadA which is specifically required for the synthesis of AFG1. The sequence is that of Versicolorin B synthase from Aspergillus parasiticus (strain ATCC 56775 / NRRL 5862 / SRRC 143 / SU-1).